Here is a 1766-residue protein sequence, read N- to C-terminus: DNA-directed RNA polymerase II subunit RPB1-A (1766 aa).

4 residues coordinate Zn(2+): C69, C72, C79, and H82. Residues D487, D489, and D491 each coordinate Mg(2+). Positions 813-825 are bridging helix; it reads PHEFFFHTMAGRE. The disordered stretch occupies residues 1660 to 1766; that stretch reads HAMSSAAPPS…EFGDEEEEEQ (107 aa). Basic and acidic residues predominate over residues 1706–1716; sequence RGDEPSTHRSD. A compositionally biased stretch (low complexity) spans 1742-1756; that stretch reads PTAKTPQQAAPPTAA.

It belongs to the RNA polymerase beta' chain family. As to quaternary structure, component of the RNA polymerase II (Pol II) complex consisting of 12 subunits.

It localises to the nucleus. It carries out the reaction RNA(n) + a ribonucleoside 5'-triphosphate = RNA(n+1) + diphosphate. In terms of biological role, DNA-dependent RNA polymerase catalyzes the transcription of DNA into RNA using the four ribonucleoside triphosphates as substrates. Largest and catalytic component of RNA polymerase II which synthesizes mRNA precursors and many functional non-coding RNAs. Forms the polymerase active center together with the second largest subunit. Pol II is the central component of the basal RNA polymerase II transcription machinery. It is composed of mobile elements that move relative to each other. RPB1 is part of the core element with the central large cleft, the clamp element that moves to open and close the cleft and the jaws that are thought to grab the incoming DNA template. At the start of transcription, a single-stranded DNA template strand of the promoter is positioned within the central active site cleft of Pol II. A bridging helix emanates from RPB1 and crosses the cleft near the catalytic site and is thought to promote translocation of Pol II by acting as a ratchet that moves the RNA-DNA hybrid through the active site by switching from straight to bent conformations at each step of nucleotide addition. During transcription elongation, Pol II moves on the template as the transcript elongates. This chain is DNA-directed RNA polymerase II subunit RPB1-A (TRP4.8), found in Trypanosoma brucei brucei.